A 562-amino-acid polypeptide reads, in one-letter code: Arginine--tRNA ligase 1 (562 aa).

Residues 122-132 carry the 'HIGH' region motif; that stretch reads PNIAKPFSMGH.

Belongs to the class-I aminoacyl-tRNA synthetase family. As to quaternary structure, monomer.

The protein resides in the cytoplasm. It carries out the reaction tRNA(Arg) + L-arginine + ATP = L-arginyl-tRNA(Arg) + AMP + diphosphate. In Bacillus cereus (strain ZK / E33L), this protein is Arginine--tRNA ligase 1.